We begin with the raw amino-acid sequence, 762 residues long: Mediator of RNA polymerase II transcription subunit 15 (762 aa).

Disordered regions lie at residues 70–102 (AQQAQQDGGGNSSQQGGGGGGGGSGMPDPINAL), 311–330 (GVGHGGPAMQQQQQAGGMGP), and 406–494 (GSGG…LNPQ). The span at 76–94 (DGGGNSSQQGGGGGGGGSG) shows a compositional bias: gly residues. Positions 465 to 481 (QRSTIGQSPGGSLNTPG) are enriched in polar residues.

It belongs to the Mediator complex subunit 15 family. In terms of assembly, component of the Mediator complex.

The protein localises to the nucleus. Component of the Mediator complex, a coactivator involved in the regulated transcription of nearly all RNA polymerase II-dependent genes. Mediator functions as a bridge to convey information from gene-specific regulatory proteins to the basal RNA polymerase II transcription machinery. Mediator is recruited to promoters by direct interactions with regulatory proteins and serves as a scaffold for the assembly of a functional preinitiation complex with RNA polymerase II and the general transcription factors. The polypeptide is Mediator of RNA polymerase II transcription subunit 15 (MED15) (Anopheles gambiae (African malaria mosquito)).